A 316-amino-acid chain; its full sequence is ATP synthase gamma chain (316 aa).

This sequence belongs to the ATPase gamma chain family. F-type ATPases have 2 components, CF(1) - the catalytic core - and CF(0) - the membrane proton channel. CF(1) has five subunits: alpha(3), beta(3), gamma(1), delta(1), epsilon(1). CF(0) has three main subunits: a, b and c.

It localises to the cellular thylakoid membrane. In terms of biological role, produces ATP from ADP in the presence of a proton gradient across the membrane. The gamma chain is believed to be important in regulating ATPase activity and the flow of protons through the CF(0) complex. This Prochlorococcus marinus (strain NATL1A) protein is ATP synthase gamma chain.